Consider the following 242-residue polypeptide: MSGCDAREGDCCSRRCGAQDKEHPRYLIPELCKQFYHLGWVTGTGGGISLKHGDEIYIAPSGVQKERIQPEDMFVCDINEKDISGPSPSKKLKKSQCTPLFMNAYTMRGAGAVIHTHSKAAVMATLLFPGREFKITHQEMIKGIKKCTSGGYYRYDDMLVVPIIENTPEEKDLKDRMAHAMNEYPDSCAVLVRRHGVYVWGETWEKAKTMCECYDYLFDIAVSMKKVGLDPSQLPVGENGIV.

The residue at position 87 (Ser87) is a Phosphoserine. Cys97 provides a ligand contact to substrate. His115 and His117 together coordinate Zn(2+). The active-site Proton donor/acceptor is the Glu139. Residue His195 coordinates Zn(2+).

The protein belongs to the aldolase class II family. MtnB subfamily. As to quaternary structure, homotetramer. Interacts with APAF1. May interact with CASP1. The cofactor is Zn(2+). In terms of tissue distribution, isoform 1 is ubiquitously expressed. Isoform 2 is expressed at lower levels and detected in heart, brain, pancreas, liver, placenta, skeletal muscle and kidney.

The protein localises to the cytoplasm. It carries out the reaction 5-(methylsulfanyl)-D-ribulose 1-phosphate = 5-methylsulfanyl-2,3-dioxopentyl phosphate + H2O. Its pathway is amino-acid biosynthesis; L-methionine biosynthesis via salvage pathway; L-methionine from S-methyl-5-thio-alpha-D-ribose 1-phosphate: step 2/6. In terms of biological role, catalyzes the dehydration of methylthioribulose-1-phosphate (MTRu-1-P) into 2,3-diketo-5-methylthiopentyl-1-phosphate (DK-MTP-1-P). Functions in the methionine salvage pathway, which plays a key role in cancer, apoptosis, microbial proliferation and inflammation. May inhibit the CASP1-related inflammatory response (pyroptosis), the CASP9-dependent apoptotic pathway and the cytochrome c-dependent and APAF1-mediated cell death. The protein is Methylthioribulose-1-phosphate dehydratase of Homo sapiens (Human).